Here is a 184-residue protein sequence, read N- to C-terminus: Deoxyuridine 5'-triphosphate nucleotidohydrolase (184 aa).

Over residues 1-16 the composition is skewed to polar residues; that stretch reads MPHTQTDAHQNNQENF. The disordered stretch occupies residues 1 to 25; the sequence is MPHTQTDAHQNNQENFSSSLISSRP. Substrate contacts are provided by residues 96 to 98, N109, 113 to 115, and K123; these read RSG and TID. Residues 165 to 184 form a disordered region; it reads STKNTVGNRGAGGFGSTGHD. Over residues 173–184 the composition is skewed to gly residues; the sequence is RGAGGFGSTGHD.

The protein belongs to the dUTPase family. Requires Mg(2+) as cofactor.

It catalyses the reaction dUTP + H2O = dUMP + diphosphate + H(+). It functions in the pathway pyrimidine metabolism; dUMP biosynthesis; dUMP from dCTP (dUTP route): step 2/2. Functionally, this enzyme is involved in nucleotide metabolism: it produces dUMP, the immediate precursor of thymidine nucleotides and it decreases the intracellular concentration of dUTP so that uracil cannot be incorporated into DNA. The protein is Deoxyuridine 5'-triphosphate nucleotidohydrolase of Bartonella henselae (strain ATCC 49882 / DSM 28221 / CCUG 30454 / Houston 1) (Rochalimaea henselae).